The primary structure comprises 262 residues: Cutinase 2 (262 aa).

Tyr-61 is a poly(ethylene terephthalate) binding site. The active-site Nucleophile is Ser-131. Poly(ethylene terephthalate) is bound by residues Met-132 and Trp-156. Active-site charge relay system residues include Asp-177 and His-209. A disulfide bond links Cys-242 and Cys-260.

It belongs to the AB hydrolase superfamily.

The protein localises to the secreted. The protein resides in the periplasm. The enzyme catalyses a butanoate ester + H2O = an aliphatic alcohol + butanoate + H(+). It catalyses the reaction an acetyl ester + H2O = an aliphatic alcohol + acetate + H(+). It carries out the reaction (ethylene terephthalate)(n) + H2O = (ethylene terephthalate)(n-1) + 4-[(2-hydroxyethoxy)carbonyl]benzoate + H(+). The catalysed reaction is cutin + H2O = cutin monomers.. In terms of biological role, catalyzes the hydrolysis of cutin, a polyester that forms the structure of plant cuticle. Shows esterase activity towards p-nitrophenol-linked aliphatic esters (pNP-aliphatic esters). Capable of degrading the plastic poly(ethylene terephthalate) (PET), the most abundant polyester plastic in the world. Capable of degrading the bioplastic poly(lactic acid) (PLLA). The polypeptide is Cutinase 2 (Thermobifida cellulosilytica).